We begin with the raw amino-acid sequence, 715 residues long: ATP-dependent zinc metalloprotease YME1L1 (715 aa).

The interval 31 to 54 is disordered; it reads VSVNTSASPKQHRDTVAEHEAPSS. The segment covering 41–52 has biased composition (basic and acidic residues); the sequence is QHRDTVAEHEAP. Residues 238–258 form a helical membrane-spanning segment; it reads ILFVLLLFGIYGLLKNPFLSV. ATP-binding residues include Val-283, Thr-325, Gly-326, Lys-327, Thr-328, and Leu-329. His-541 contacts Zn(2+). The active site involves Glu-542. Residues His-545 and Asp-619 each coordinate Zn(2+).

This sequence in the N-terminal section; belongs to the AAA ATPase family. It in the C-terminal section; belongs to the peptidase M41 family. In terms of assembly, homohexamer; may also form heterohexamers. Exists in several complexes of 600-1100 kDa. Interacts with AFG1L. It depends on Zn(2+) as a cofactor. In terms of processing, proteolytically processed by mitochondrial processing peptidase (MPP) to generate the mature form. Degraded in an OMA1-dependent manner in response to oxidative stress.

The protein resides in the mitochondrion inner membrane. It localises to the mitochondrion. It carries out the reaction ATP + H2O = ADP + phosphate + H(+). Functionally, ATP-dependent metalloprotease that catalyzes the degradation of folded and unfolded proteins with a suitable degron sequence in the mitochondrial intermembrane region. Plays an important role in regulating mitochondrial morphology and function by cleaving OPA1 at position S2, giving rise to a form of OPA1 that promotes maintenance of normal mitochondrial structure and mitochondrial protein metabolism. Ensures cell proliferation, maintains normal cristae morphology and complex I respiration activity, promotes antiapoptotic activity and protects mitochondria from the accumulation of oxidatively damaged membrane proteins. Required to control the accumulation of nonassembled respiratory chain subunits (NDUFB6, OX4 and ND1). Involved in the mitochondrial adaptation in response to various signals, such as stress or developmental cues, by mediating degradation of mitochondrial proteins to rewire the mitochondrial proteome. Catalyzes degradation of mitochondrial proteins, such as translocases, lipid transfer proteins and metabolic enzymes in response to nutrient starvation in order to limit mitochondrial biogenesis: mechanistically, YME1L is activated by decreased phosphatidylethanolamine levels caused by LPIN1 activity in response to mTORC1 inhibition. Acts as a regulator of adult neural stem cell self-renewal by promoting mitochondrial proteome rewiring, preserving neural stem and progenitor cells self-renewal. Required for normal, constitutive degradation of PRELID1. Catalyzes the degradation of OMA1 in response to membrane depolarization. Mediates degradation of TIMM17A downstream of the integrated stress response (ISR). Catalyzes degradation of MICU1 when MICU1 is not assembled via an interchain disulfide. This chain is ATP-dependent zinc metalloprotease YME1L1 (Yme1l1), found in Rattus norvegicus (Rat).